The sequence spans 299 residues: Adenylate kinase (299 aa).

A disordered region spans residues 1-30 (MATTTTRGARDSPFPAPSEGEIKKELNMKG). ATP is bound at residue 85–90 (GAGKGT). An NMP region spans residues 107 to 136 (ATGDMLREQVSKQTELGKMAKKIMDQGGLV). AMP contacts are provided by residues Thr108, Arg113, 134-136 (GLV), 163-166 (GFPR), and Gln170. The interval 204 to 241 (GRLVHPASGRSYHKEFSPPKKPMTDDVTGEPLIQRSDD) is LID. ATP is bound by residues Arg205 and 214–215 (SY). Residues 212-237 (GRSYHKEFSPPKKPMTDDVTGEPLIQ) form a disordered region. Basic and acidic residues predominate over residues 215-227 (YHKEFSPPKKPMT). Positions 238 and 249 each coordinate AMP. Gln277 is a binding site for ATP.

It belongs to the adenylate kinase family. AK2 subfamily. As to quaternary structure, monomer.

It is found in the cytoplasm. Its subcellular location is the cytosol. The protein localises to the mitochondrion intermembrane space. It catalyses the reaction AMP + ATP = 2 ADP. Its function is as follows. Catalyzes the reversible transfer of the terminal phosphate group between ATP and AMP. Plays an important role in cellular energy homeostasis and in adenine nucleotide metabolism. Adenylate kinase activity is critical for regulation of the phosphate utilization and the AMP de novo biosynthesis pathways. The sequence is that of Adenylate kinase from Mycosarcoma maydis (Corn smut fungus).